The chain runs to 313 residues: Ribonuclease HIII (313 aa).

One can recognise an RNase H type-2 domain in the interval 94 to 310 (MSVIGSDEVG…TQKAKRLVER (217 aa)). The a divalent metal cation site is built by D100, E101, and D205.

It belongs to the RNase HII family. RnhC subfamily. Mn(2+) serves as cofactor. The cofactor is Mg(2+).

The protein localises to the cytoplasm. It catalyses the reaction Endonucleolytic cleavage to 5'-phosphomonoester.. In terms of biological role, endonuclease that specifically degrades the RNA of RNA-DNA hybrids. This Bacillus velezensis (strain DSM 23117 / BGSC 10A6 / LMG 26770 / FZB42) (Bacillus amyloliquefaciens subsp. plantarum) protein is Ribonuclease HIII.